A 567-amino-acid chain; its full sequence is Thiol:disulfide interchange protein DsbD (567 aa).

The N-terminal stretch at 1-19 (MAQRIFTLILLLCSTSAFA) is a signal peptide. 2 disulfides stabilise this stretch: cysteine 122/cysteine 128 and cysteine 185/cysteine 307. 7 consecutive transmembrane segments (helical) span residues 170 to 192 (ALWA…MYPL), 212 to 234 (LAFI…VAAA), 246 to 268 (YVLI…LFTL), 297 to 319 (GAIA…LLYI), 326 to 348 (WLGG…LVTV), 358 to 380 (GPWM…VFLL), and 387 to 409 (AWGL…ITSL). Positions 435-567 (QDWAFGSPSA…FSAHLHDRQP (133 aa)) constitute a Thioredoxin domain. Cysteine 482 and cysteine 485 are disulfide-bonded.

It belongs to the thioredoxin family. DsbD subfamily.

The protein localises to the cell inner membrane. The catalysed reaction is [protein]-dithiol + NAD(+) = [protein]-disulfide + NADH + H(+). The enzyme catalyses [protein]-dithiol + NADP(+) = [protein]-disulfide + NADPH + H(+). In terms of biological role, required to facilitate the formation of correct disulfide bonds in some periplasmic proteins and for the assembly of the periplasmic c-type cytochromes. Acts by transferring electrons from cytoplasmic thioredoxin to the periplasm. This transfer involves a cascade of disulfide bond formation and reduction steps. In Salmonella typhimurium (strain LT2 / SGSC1412 / ATCC 700720), this protein is Thiol:disulfide interchange protein DsbD.